The chain runs to 340 residues: MGLSVGIYGGSGYVGVELVRLLAGHPEVGSLAVASRGHAGRRIGEVYPQVAVGGEYLDPSEVDVSSLDVAFVAYGHGESAEAVRGLLEGGVRLVVDLSADFRLPDVRVYEEWYGEHPAPELLGEAHYGLPEVFGALEGRLVANPGCYPTAAILALAPVVRRMGGEVRSVTINALSGVSGAGAKPSARTHFVSVNESVSPYGVSGGEPRHRHTPEIEIMLRRLGEAPPVTFVPHLLPISRGELETITVEAGELPGAEEVLGWYREDYGGWRFVEAREEVPHISHVANTNRARLSAAVDRRAGKLLLFAAVDNLLKGAAGEAVQNMNLALGYPEDLGLEHLR.

The active site involves C146.

Belongs to the NAGSA dehydrogenase family. Type 1 subfamily.

It is found in the cytoplasm. It catalyses the reaction N-acetyl-L-glutamate 5-semialdehyde + phosphate + NADP(+) = N-acetyl-L-glutamyl 5-phosphate + NADPH + H(+). It functions in the pathway amino-acid biosynthesis; L-arginine biosynthesis; N(2)-acetyl-L-ornithine from L-glutamate: step 3/4. In terms of biological role, catalyzes the NADPH-dependent reduction of N-acetyl-5-glutamyl phosphate to yield N-acetyl-L-glutamate 5-semialdehyde. This Rubrobacter xylanophilus (strain DSM 9941 / JCM 11954 / NBRC 16129 / PRD-1) protein is N-acetyl-gamma-glutamyl-phosphate reductase.